Consider the following 152-residue polypeptide: Ribonuclease pancreatic gamma-type (152 aa).

Positions 1 to 25 (MGLEKSFILFSLLVLVLGCVQPSLV) are cleaved as a signal peptide. A disordered region spans residues 26–48 (GESKESPSEKFKRRHMDEEGPYQ). Basic and acidic residues predominate over residues 27–43 (ESKESPSEKFKRRHMDE). Residues K35 and R38 each coordinate substrate. The Proton acceptor role is filled by H40. Disulfide bonds link C54/C112, C68/C123, C86/C138, and C93/C100. Substrate-binding positions include 69-73 (KPLNT) and K94. The active-site Proton donor is the H147.

This sequence belongs to the pancreatic ribonuclease family. As to quaternary structure, monomer.

Its subcellular location is the secreted. It carries out the reaction an [RNA] containing cytidine + H2O = an [RNA]-3'-cytidine-3'-phosphate + a 5'-hydroxy-ribonucleotide-3'-[RNA].. The enzyme catalyses an [RNA] containing uridine + H2O = an [RNA]-3'-uridine-3'-phosphate + a 5'-hydroxy-ribonucleotide-3'-[RNA].. Its function is as follows. Endonuclease that catalyzes the cleavage of RNA on the 3' side of pyrimidine nucleotides. Acts on single-stranded and double-stranded RNA. The protein is Ribonuclease pancreatic gamma-type of Rattus fuscipes (Bush rat).